The sequence spans 205 residues: ATP-dependent Clp protease proteolytic subunit (205 aa).

Ser108 acts as the Nucleophile in catalysis. His133 is an active-site residue.

This sequence belongs to the peptidase S14 family. In terms of assembly, fourteen ClpP subunits assemble into 2 heptameric rings which stack back to back to give a disk-like structure with a central cavity, resembling the structure of eukaryotic proteasomes.

The protein localises to the cytoplasm. The catalysed reaction is Hydrolysis of proteins to small peptides in the presence of ATP and magnesium. alpha-casein is the usual test substrate. In the absence of ATP, only oligopeptides shorter than five residues are hydrolyzed (such as succinyl-Leu-Tyr-|-NHMec, and Leu-Tyr-Leu-|-Tyr-Trp, in which cleavage of the -Tyr-|-Leu- and -Tyr-|-Trp bonds also occurs).. Functionally, cleaves peptides in various proteins in a process that requires ATP hydrolysis. Has a chymotrypsin-like activity. Plays a major role in the degradation of misfolded proteins. This is ATP-dependent Clp protease proteolytic subunit from Alcanivorax borkumensis (strain ATCC 700651 / DSM 11573 / NCIMB 13689 / SK2).